The primary structure comprises 61 residues: Small ribosomal subunit protein uS14 (61 aa).

Cys24, Cys27, Cys40, and Cys43 together coordinate Zn(2+).

Belongs to the universal ribosomal protein uS14 family. Zinc-binding uS14 subfamily. Part of the 30S ribosomal subunit. Contacts proteins S3 and S10. It depends on Zn(2+) as a cofactor.

Functionally, binds 16S rRNA, required for the assembly of 30S particles and may also be responsible for determining the conformation of the 16S rRNA at the A site. The polypeptide is Small ribosomal subunit protein uS14 (Geotalea daltonii (strain DSM 22248 / JCM 15807 / FRC-32) (Geobacter daltonii)).